A 71-amino-acid chain; its full sequence is Small ribosomal subunit protein bS21 (71 aa).

The interval 38-71 (YEKPTTVRKRAKAAAQKRHAKKLSRENARRVRLY) is disordered. The segment covering 43–59 (TVRKRAKAAAQKRHAKK) has biased composition (basic residues). Basic and acidic residues predominate over residues 60–71 (LSRENARRVRLY).

Belongs to the bacterial ribosomal protein bS21 family.

The chain is Small ribosomal subunit protein bS21 from Aliivibrio fischeri (strain ATCC 700601 / ES114) (Vibrio fischeri).